A 251-amino-acid polypeptide reads, in one-letter code: SRR1-like protein (251 aa).

Belongs to the SRR1 family.

The protein localises to the cytoplasm. Its subcellular location is the nucleus. The chain is SRR1-like protein from Schizosaccharomyces pombe (strain 972 / ATCC 24843) (Fission yeast).